A 123-amino-acid polypeptide reads, in one-letter code: Protein Rev (123 aa).

S5 bears the Phosphoserine; by host CK2 mark. The interval 18-26 (IIKTLYQSN) is homomultimerization. Disordered regions lie at residues 24-50 (QSNP…ARQR) and 79-123 (EGLS…GTKE). The short motif at 34–50 (TRQARKNRRRRWRARQR) is the Nuclear localization signal and RNA-binding (RRE) element. Residues 36 to 50 (QARKNRRRRWRARQR) show a composition bias toward basic residues. Positions 73–84 (FQLPPLEGLSLD) match the Nuclear export signal and binding to XPO1 motif. At S92 the chain carries Phosphoserine; by host. Positions 93–105 (GTQQPQGTETGVG) are enriched in low complexity.

This sequence belongs to the HIV-1 REV protein family. In terms of assembly, homomultimer; when bound to the RRE. Multimeric assembly is essential for activity and may involve XPO1. Binds to human KPNB1, XPO1, TNPO1, RANBP5 and IPO7. Interacts with the viral Integrase. Interacts with human KHDRBS1. Interacts with human NAP1; this interaction decreases Rev multimerization and stimulates its activity. Interacts with human DEAD-box helicases DDX3 and DDX24; these interactions may serve for viral RNA export to the cytoplasm and packaging, respectively. Interacts with human PSIP1; this interaction may inhibit HIV-1 DNA integration by promoting dissociation of the Integrase-LEDGF/p75 complex. Post-translationally, asymmetrically arginine dimethylated at one site by host PRMT6. Methylation impairs the RNA-binding activity and export of viral RNA from the nucleus to the cytoplasm. Phosphorylated by protein kinase CK2. Presence of, and maybe binding to the N-terminus of the regulatory beta subunit of CK2 is necessary for CK2-mediated Rev's phosphorylation.

The protein resides in the host nucleus. Its subcellular location is the host nucleolus. It localises to the host cytoplasm. In terms of biological role, escorts unspliced or incompletely spliced viral pre-mRNAs (late transcripts) out of the nucleus of infected cells. These pre-mRNAs carry a recognition sequence called Rev responsive element (RRE) located in the env gene, that is not present in fully spliced viral mRNAs (early transcripts). This function is essential since most viral proteins are translated from unspliced or partially spliced pre-mRNAs which cannot exit the nucleus by the pathway used by fully processed cellular mRNAs. Rev itself is translated from a fully spliced mRNA that readily exits the nucleus. Rev's nuclear localization signal (NLS) binds directly to KPNB1/Importin beta-1 without previous binding to KPNA1/Importin alpha-1. KPNB1 binds to the GDP bound form of RAN (Ran-GDP) and targets Rev to the nucleus. In the nucleus, the conversion from Ran-GDP to Ran-GTP dissociates Rev from KPNB1 and allows Rev's binding to the RRE in viral pre-mRNAs. Rev multimerization on the RRE via cooperative assembly exposes its nuclear export signal (NES) to the surface. Rev can then form a complex with XPO1/CRM1 and Ran-GTP, leading to nuclear export of the complex. Conversion from Ran-GTP to Ran-GDP mediates dissociation of the Rev/RRE/XPO1/RAN complex, so that Rev can return to the nucleus for a subsequent round of export. Beside KPNB1, also seems to interact with TNPO1/Transportin-1, RANBP5/IPO5 and IPO7/RANBP7 for nuclear import. The nucleoporin-like HRB/RIP is an essential cofactor that probably indirectly interacts with Rev to release HIV RNAs from the perinuclear region to the cytoplasm. The sequence is that of Protein Rev from Human immunodeficiency virus type 1 group M subtype G (isolate 92NG083) (HIV-1).